The primary structure comprises 232 residues: Phosphatidylserine decarboxylase proenzyme (232 aa).

Residue serine 190 is the Schiff-base intermediate with substrate; via pyruvic acid of the active site. A Pyruvic acid (Ser); by autocatalysis modification is found at serine 190.

Belongs to the phosphatidylserine decarboxylase family. PSD-A subfamily. Heterodimer of a large membrane-associated beta subunit and a small pyruvoyl-containing alpha subunit. Pyruvate serves as cofactor. Is synthesized initially as an inactive proenzyme. Formation of the active enzyme involves a self-maturation process in which the active site pyruvoyl group is generated from an internal serine residue via an autocatalytic post-translational modification. Two non-identical subunits are generated from the proenzyme in this reaction, and the pyruvate is formed at the N-terminus of the alpha chain, which is derived from the carboxyl end of the proenzyme. The post-translation cleavage follows an unusual pathway, termed non-hydrolytic serinolysis, in which the side chain hydroxyl group of the serine supplies its oxygen atom to form the C-terminus of the beta chain, while the remainder of the serine residue undergoes an oxidative deamination to produce ammonia and the pyruvoyl prosthetic group on the alpha chain.

The protein localises to the cell membrane. The enzyme catalyses a 1,2-diacyl-sn-glycero-3-phospho-L-serine + H(+) = a 1,2-diacyl-sn-glycero-3-phosphoethanolamine + CO2. It functions in the pathway phospholipid metabolism; phosphatidylethanolamine biosynthesis; phosphatidylethanolamine from CDP-diacylglycerol: step 2/2. Its function is as follows. Catalyzes the formation of phosphatidylethanolamine (PtdEtn) from phosphatidylserine (PtdSer). This Rhizobium leguminosarum bv. trifolii (strain WSM2304) protein is Phosphatidylserine decarboxylase proenzyme.